The sequence spans 984 residues: Probable beta-galactosidase C (984 aa).

A signal peptide spans M1–A19. Substrate is bound by residues Y78, N123, A124, E125, and N183. E184 acts as the Proton donor in catalysis. Y247 provides a ligand contact to substrate. C253 and C300 form a disulfide bridge. N272 carries an N-linked (GlcNAc...) asparagine glycan. The active-site Nucleophile is E283. Residue Y349 coordinates substrate. N-linked (GlcNAc...) asparagine glycans are attached at residues N387, N433, N462, N516, N583, N599, N673, N716, N756, N860, and N870.

This sequence belongs to the glycosyl hydrolase 35 family.

Its subcellular location is the secreted. It catalyses the reaction Hydrolysis of terminal non-reducing beta-D-galactose residues in beta-D-galactosides.. In terms of biological role, cleaves beta-linked terminal galactosyl residues from gangliosides, glycoproteins, and glycosaminoglycans. The protein is Probable beta-galactosidase C (lacC) of Sclerotinia sclerotiorum (strain ATCC 18683 / 1980 / Ss-1) (White mold).